Consider the following 327-residue polypeptide: Flotillin-like protein FloA (327 aa).

A run of 2 helical transmembrane segments spans residues 8 to 28 and 29 to 49; these read VLLITGGILIFLAIFFTLVPI and PLWISSLAAGVRVSIFTLVGM.

It belongs to the flotillin-like FloA family. As to quaternary structure, homooligomerizes.

The protein localises to the cell membrane. The protein resides in the membrane raft. Found in functional membrane microdomains (FMM) that may be equivalent to eukaryotic membrane rafts. FMMs are highly dynamic and increase in number as cells age. Flotillins are thought to be important factors in membrane fluidity. The protein is Flotillin-like protein FloA of Exiguobacterium sibiricum (strain DSM 17290 / CCUG 55495 / CIP 109462 / JCM 13490 / 255-15).